Consider the following 216-residue polypeptide: Invasion protein InvF (216 aa).

Residues 112 to 210 enclose the HTH araC/xylS-type domain; sequence YWLVGYLLAQ…GVSPRKLSNI (99 aa). 2 DNA-binding regions (H-T-H motif) span residues 129 to 150 and 177 to 200; these read RMLGEDYGVSYTHFRRLCSRAL and ITQLAVNHGYSSPSHFSSEIKELI.

Transcriptional regulator required for the expression of several genes encoding type III secretion system SPI1 effector proteins. The interaction with SicA is necessary for the activation of sigDE (sopB pipC), sicAsipBCDA, and sopE. The protein is Invasion protein InvF (invF) of Salmonella typhi.